The chain runs to 408 residues: Tyrosine--tRNA ligase (408 aa).

An L-tyrosine-binding site is contributed by Tyr-35. The short motif at 40–49 (PTADSLHVGH) is the 'HIGH' region element. L-tyrosine-binding residues include Tyr-168 and Gln-172. The 'KMSKS' region motif lies at 228-232 (KMGKT). Lys-231 lines the ATP pocket. One can recognise an S4 RNA-binding domain in the interval 342–407 (INIIDLLLKT…GKKTYHRVKL (66 aa)).

Belongs to the class-I aminoacyl-tRNA synthetase family. TyrS type 1 subfamily. Homodimer.

It is found in the cytoplasm. It catalyses the reaction tRNA(Tyr) + L-tyrosine + ATP = L-tyrosyl-tRNA(Tyr) + AMP + diphosphate + H(+). Functionally, catalyzes the attachment of tyrosine to tRNA(Tyr) in a two-step reaction: tyrosine is first activated by ATP to form Tyr-AMP and then transferred to the acceptor end of tRNA(Tyr). In Acetivibrio thermocellus (strain ATCC 27405 / DSM 1237 / JCM 9322 / NBRC 103400 / NCIMB 10682 / NRRL B-4536 / VPI 7372) (Clostridium thermocellum), this protein is Tyrosine--tRNA ligase.